A 339-amino-acid chain; its full sequence is Trace amine-associated receptor 1 (339 aa).

The Extracellular segment spans residues 1 to 25 (MMPFCHNIINISCVKNNWSNDVRAS). Cystine bridges form between Cys-5/Cys-178, Cys-13/Cys-88, and Cys-96/Cys-182. N-linked (GlcNAc...) asparagine glycosylation is found at Asn-10 and Asn-17. A helical transmembrane segment spans residues 26–46 (LYSLMVLIILTTLVGNLIVIV). Over 47-59 (SISHFKELHTPTN) the chain is Cytoplasmic. Residues 60 to 80 (WLIHSMATVDFLPGCLVMPYS) traverse the membrane as a helical segment. Residues 81–98 (MVRSAEHCWYFGEVFCKI) are Extracellular-facing. A helical membrane pass occupies residues 99-119 (HTSTDIMLSSASIFHLSFISI). Asp-103 lines the 2-phenylethylamine pocket. The Cytoplasmic portion of the chain corresponds to 120 to 136 (DRYYAVCDPLRYKAKIN). A helical membrane pass occupies residues 137 to 157 (ILVICVMIFISWSVPAVFAFG). The Extracellular portion of the chain corresponds to 158–188 (MIFLELNFKGAEEIYYKHVHCRGGCSVFFSK). A helical membrane pass occupies residues 189–209 (ISGVLTFMTSFYIPGSIMLCV). At 210–252 (YYRIYLIAKEQARLINDANQKLQIGLEMKNGISQSKERKAVKT) the chain is on the cytoplasmic side. The chain crosses the membrane as a helical span at residues 253–273 (LGIVMGVFLICWCPFFICTVM). Residues 274–287 (DPFLHYIIPPTLND) are Extracellular-facing. A helical membrane pass occupies residues 288–308 (VLIWFGYLNSTFNPMVYAFFY). At 309 to 339 (PWFRKALKMMLFGKIFQKDSSRCKLFLELSS) the chain is on the cytoplasmic side.

It belongs to the G-protein coupled receptor 1 family.

It is found in the endomembrane system. It localises to the endoplasmic reticulum membrane. The protein localises to the cell membrane. Its function is as follows. Intracellular G-protein coupled receptor for trace amines, which recognizes endogenous amine-containing metabolites such as beta-phenylethylamine (beta-PEA), 3-iodothyronamine (T1AM), isoamylamine (IAA), cadaverine (CAD), cyclohexylamine (CHA), p-tyramine (p-TYR), trimethylamine (TMA), octopamine and tryptamine. Also functions as a receptor for various drugs and psychoactive substances, such as amphetamine and methamphetamine. Unresponsive to classical biogenic amines, such as epinephrine and histamine and only partially activated by dopamine and serotonin. Expressed in both the central and peripheral nervous system: TAAR1 activation regulates the activity of several neurotransmitter signaling pathways by (1) decreasing the basal firing rates of the neurons involved and by (2) lowering the sensitivity of receptors to neurotransmitters. Ligand binding causes a conformation change that triggers signaling via guanine nucleotide-binding proteins (G proteins) and modulates the activity of downstream effectors. TAAR1 is coupled with different G(i)/G(o)-, G(s)- or G(q)/G(11) classes of G alpha proteins depending on the ligand. CAD-binding is coupled to G(i)/G(o) G alpha proteins and mediates inhibition of adenylate cyclase activity. T1AM- or beta-PEA-binding is coupled to G(s) G alpha proteins and mediates activation of adenylate cyclase activity. CHA- or IAA-binding is coupled to G(q)/G(11) G alpha proteins and activates phospholipase C-beta, releasing diacylglycerol (DAG) and inositol 1,4,5-trisphosphate (IP3) second messengers. TMA-binding is coupled with all three G(i)/G(o)-, G(s)- or G(q)/G(11) G alpha protein subtypes. The polypeptide is Trace amine-associated receptor 1 (TAAR1) (Pan troglodytes (Chimpanzee)).